The chain runs to 819 residues: MDTEGFGELLQQAEQLAAETEGISELPHVERNLQEIQQAGERLCSRTLTRTSQETADVKASVLLGSRGLDISHISQRLESLSAATTFEPLEPVKDTDIQGFLKNEKDNALLSAIEESRKRTFGMAEEYHRESMLVEWEQVKQRILHTLLASGEDALDFTQESEPSYISDVGPPGRSSLDNIEMAYARQIYIYNEKIVNGHLQPNLVDLCASVAELDDKSISDMWTMVKQMTDVLLTPATDALKNRSSVEVRMEFVRQALAYLEQSYKNYTLVTVFGNLHQAQLGGVPGTYQLVRSFLNIKLPAPLPGLQDGEVEGHPVWALIYYCMRCGDLLAASQVVNRAQHQLGEFKTWFQEYMNSKDRRLSPATENKLRLHYRRALRNNTDPYKRAVYCIIGRCDVTDNQSEVADKTEDYLWLKLNQVCFDDDGTSSPQDRLTLSQFQKQLLEDYGESHFTVNQQPFLYFQVLFLTAQFEAAIAFLFRMERLRCHAVHVALVLFELKLLLKSSGQSAQLLSHEPGDPPCMRRLNFVRLLMLYTRKFESTDPREALQYFYFLRDEKDSQGENMFLRCVSELVIESREFDMILGKLENDGSRKPGVIDKFTSDTKPIINKVASVAENKGLFEEAAKLYDLAKNADKVLELMNKLLSPVVPQISAPQSNKERLKNMALSIAERYRAQGISANKFVDSTFYLLLDLITFFDEYHSGHIDRAFDIIERLKLVPLNQESVEERVAAFRNFSDEIRHNLSEVLLATMNILFTQFKRLKGTSPSSSSRPQRVIEDRDSQLRSQACTLITFAGMIPYRTSGDTNARLVQMEVLMN.

Phosphothreonine is present on Thr49. 7 positions are modified to phosphoserine: Ser52, Ser66, Ser72, Ser75, Ser80, Ser430, and Ser767.

It belongs to the nucleoporin interacting component (NIC) family. In terms of assembly, part of the nuclear pore complex (NPC). Component of the p62 complex, a complex composed of NUP62 and NUP54. Forms a complex with NUP35, NUP155, NUP205 and lamin B; the interaction with NUP35 is direct. Does not interact with TPR. Interacts with SMAD4 and IPO7; translocates SMAD4 to the nucleus through the NPC upon BMP7 stimulation resulting in activation of SMAD4 signaling.

It is found in the nucleus membrane. The protein resides in the nucleus. It localises to the nuclear pore complex. The protein localises to the nucleus envelope. Its function is as follows. Plays a role in the nuclear pore complex (NPC) assembly and/or maintenance. May anchor nucleoporins, but not NUP153 and TPR, to the NPC. During renal development, regulates podocyte migration and proliferation through SMAD4 signaling. The polypeptide is Nuclear pore complex protein Nup93 (NUP93) (Pongo abelii (Sumatran orangutan)).